Here is a 232-residue protein sequence, read N- to C-terminus: Large ribosomal subunit protein uL1 (232 aa).

Belongs to the universal ribosomal protein uL1 family. In terms of assembly, part of the 50S ribosomal subunit.

Its function is as follows. Binds directly to 23S rRNA. The L1 stalk is quite mobile in the ribosome, and is involved in E site tRNA release. Functionally, protein L1 is also a translational repressor protein, it controls the translation of the L11 operon by binding to its mRNA. In Stenotrophomonas maltophilia (strain R551-3), this protein is Large ribosomal subunit protein uL1.